Here is a 392-residue protein sequence, read N- to C-terminus: Hercynylcysteine sulfoxide lyase (392 aa).

Residue K219 is modified to N6-(pyridoxal phosphate)lysine.

The protein belongs to the class-V pyridoxal-phosphate-dependent aminotransferase family. EgtE subfamily. Pyridoxal 5'-phosphate is required as a cofactor.

It is found in the cytoplasm. Its subcellular location is the nucleus. The enzyme catalyses S-(hercyn-2-yl)-L-cysteine S-oxide + AH2 + H(+) = ergothioneine + pyruvate + A + NH4(+). The protein operates within amino-acid biosynthesis; ergothioneine biosynthesis. Catalyzes the conversion of hercynylcysteine sulfoxide to ergothioneine by cleaving the cysteine residue at the sulfur atom, the last step in the biosynthesis pathway of ergothioneine. The sequence is that of Hercynylcysteine sulfoxide lyase from Schizosaccharomyces pombe (strain 972 / ATCC 24843) (Fission yeast).